Reading from the N-terminus, the 126-residue chain is Hydrogenase maturation factor HypA (126 aa).

His2 lines the Ni(2+) pocket. Positions 78, 81, 97, and 100 each coordinate Zn(2+).

It belongs to the HypA/HybF family.

In terms of biological role, involved in the maturation of [NiFe] hydrogenases. Required for nickel insertion into the metal center of the hydrogenase. This Methanococcus maripaludis (strain C5 / ATCC BAA-1333) protein is Hydrogenase maturation factor HypA.